A 116-amino-acid polypeptide reads, in one-letter code: Large ribosomal subunit protein bL19 (116 aa).

It belongs to the bacterial ribosomal protein bL19 family.

Its function is as follows. This protein is located at the 30S-50S ribosomal subunit interface and may play a role in the structure and function of the aminoacyl-tRNA binding site. This chain is Large ribosomal subunit protein bL19 (rplS), found in Streptomyces lividans.